The following is an 84-amino-acid chain: Small ribosomal subunit protein uS17 (84 aa).

This sequence belongs to the universal ribosomal protein uS17 family. In terms of assembly, part of the 30S ribosomal subunit.

One of the primary rRNA binding proteins, it binds specifically to the 5'-end of 16S ribosomal RNA. This chain is Small ribosomal subunit protein uS17, found in Pectobacterium atrosepticum (strain SCRI 1043 / ATCC BAA-672) (Erwinia carotovora subsp. atroseptica).